The sequence spans 1087 residues: Alpha-mannosidase G (1087 aa).

Zn(2+) contacts are provided by histidine 264, aspartate 266, aspartate 376, and histidine 579. Residue aspartate 376 is the Nucleophile of the active site.

This sequence belongs to the glycosyl hydrolase 38 family. The cofactor is Zn(2+).

It carries out the reaction Hydrolysis of terminal, non-reducing alpha-D-mannose residues in alpha-D-mannosides.. This is Alpha-mannosidase G (manG) from Dictyostelium discoideum (Social amoeba).